Reading from the N-terminus, the 247-residue chain is UPF0246 protein LCABL_22600 (247 aa).

The protein belongs to the UPF0246 family.

This Lacticaseibacillus casei (strain BL23) (Lactobacillus casei) protein is UPF0246 protein LCABL_22600.